The chain runs to 505 residues: Endoglucanase 5 (505 aa).

The first 31 residues, M1–S31, serve as a signal peptide directing secretion. A catalytic region spans residues A32–L334. Substrate is bound by residues H64, W68–F69, Y95, and H130. The active-site Proton donor is the E168. Position 230 (Y230) interacts with substrate. The Nucleophile role is filled by E256. Residues A262–S263, W290, and K295–E297 each bind substrate. The tract at residues A332–G355 is disordered. The tract at residues G335–G352 is linker. Low complexity predominate over residues T339–G355. The 153-residue stretch at T353–P505 folds into the CBM3 domain.

Belongs to the glycosyl hydrolase 5 (cellulase A) family.

Its subcellular location is the secreted. It carries out the reaction Endohydrolysis of (1-&gt;4)-beta-D-glucosidic linkages in cellulose, lichenin and cereal beta-D-glucans.. In terms of biological role, endoglucanase with some exoglucanase activity. The sequence is that of Endoglucanase 5 (celV) from Pectobacterium carotovorum subsp. carotovorum (Erwinia carotovora subsp. carotovora).